The chain runs to 90 residues: U7-theraphotoxin-Hhn1a 7 (90 aa).

Positions 1–19 (MKTAIFTVVLALAVFAVLS) are cleaved as a signal peptide. The propeptide occupies 20-50 (FGWEANEKALSEGFTELIHEKEAASETEARE). Disulfide bonds link cysteine 51-cysteine 65, cysteine 58-cysteine 70, and cysteine 64-cysteine 81.

The protein belongs to the neurotoxin 10 (Hwtx-1) family. 13 (Hntx-13) subfamily. In terms of tissue distribution, expressed by the venom gland.

The protein resides in the secreted. In terms of biological role, ion channel inhibitor. The sequence is that of U7-theraphotoxin-Hhn1a 7 from Cyriopagopus hainanus (Chinese bird spider).